The sequence spans 692 residues: Elongation factor G (692 aa).

In terms of domain architecture, tr-type G spans alanine 8–leucine 282. GTP contacts are provided by residues alanine 17–threonine 24, aspartate 81–histidine 85, and asparagine 135–aspartate 138.

This sequence belongs to the TRAFAC class translation factor GTPase superfamily. Classic translation factor GTPase family. EF-G/EF-2 subfamily.

It is found in the cytoplasm. Functionally, catalyzes the GTP-dependent ribosomal translocation step during translation elongation. During this step, the ribosome changes from the pre-translocational (PRE) to the post-translocational (POST) state as the newly formed A-site-bound peptidyl-tRNA and P-site-bound deacylated tRNA move to the P and E sites, respectively. Catalyzes the coordinated movement of the two tRNA molecules, the mRNA and conformational changes in the ribosome. This Streptococcus pyogenes serotype M49 (strain NZ131) protein is Elongation factor G.